The primary structure comprises 126 residues: Small ribosomal subunit protein uS12 (126 aa).

At Asp89 the chain carries 3-methylthioaspartic acid.

It belongs to the universal ribosomal protein uS12 family. Part of the 30S ribosomal subunit. Contacts proteins S8 and S17. May interact with IF1 in the 30S initiation complex.

In terms of biological role, with S4 and S5 plays an important role in translational accuracy. Its function is as follows. Interacts with and stabilizes bases of the 16S rRNA that are involved in tRNA selection in the A site and with the mRNA backbone. Located at the interface of the 30S and 50S subunits, it traverses the body of the 30S subunit contacting proteins on the other side and probably holding the rRNA structure together. The combined cluster of proteins S8, S12 and S17 appears to hold together the shoulder and platform of the 30S subunit. This Polynucleobacter necessarius subsp. necessarius (strain STIR1) protein is Small ribosomal subunit protein uS12.